The following is a 256-amino-acid chain: Reaction center protein M chain (256 aa).

3 consecutive transmembrane segments (helical) span residues 52 to 78, 110 to 139, and 142 to 167; these read PGVA…LASV, EGGW…ARAL, and GTHM…PLLL. Positions 181 and 201 each coordinate (7R,8Z)-bacteriochlorophyll b. The helical transmembrane segment at 197-225 threads the bilayer; the sequence is YNPFHMLSIAFLYGSAVLFAMHGATILAV. Fe cation is bound by residues His218 and Glu233. Residue Trp251 coordinates a ubiquinone.

This sequence belongs to the reaction center PufL/M/PsbA/D family. In terms of assembly, reaction center is composed of four bacteriochlorophylls, two bacteriopheophytins, two ubiquinones, one iron, and two highly hydrophobic polypeptide chains (designated L and M).

It localises to the cellular chromatophore membrane. In terms of biological role, the reaction center is a membrane-bound complex that mediates the initial photochemical event in the electron transfer process of photosynthesis. The chain is Reaction center protein M chain (pufM) from Pararhodospirillum photometricum (Rhodospirillum photometricum).